We begin with the raw amino-acid sequence, 470 residues long: Cholesterol 7-desaturase nvd 1 (470 aa).

The helical transmembrane segment at 67–87 threads the bilayer; it reads LALCIAGFSVLMYFLYVLVFV. In terms of domain architecture, Rieske spans 136 to 238; that stretch reads FRLVDSQQLE…CREVNKAIFV (103 aa). The [2Fe-2S] cluster site is built by Cys176, His178, Cys196, and His199.

The protein belongs to the cholesterol 7-desaturase family. It depends on [2Fe-2S] cluster as a cofactor.

It is found in the membrane. It carries out the reaction cholesterol + NADPH + O2 + H(+) = 7-dehydrocholesterol + NADP(+) + 2 H2O. It catalyses the reaction cholesterol + NADH + O2 + H(+) = 7-dehydrocholesterol + NAD(+) + 2 H2O. Its pathway is steroid hormone biosynthesis; dafachronic acid biosynthesis. In terms of biological role, catalyzes the production of 7-dehydrocholesterol (7-DHC or cholesta-5,7-dien-3beta-ol) by inserting a double bond (desaturating) at the C7-C8 single bond of cholesterol. Essential regulator of steroid biosynthesis as this reaction is the first step in the synthesis of the steroid hormone Delta(7)-dafachronic acid. The polypeptide is Cholesterol 7-desaturase nvd 1 (Ciona intestinalis (Transparent sea squirt)).